A 273-amino-acid chain; its full sequence is Dermonecrotic toxin LspiSicTox-betaIE1i (273 aa).

2 residues coordinate Mg(2+): Glu-25 and Asp-27. The active-site Nucleophile is His-41. Cysteines 45 and 51 form a disulfide. Asp-85 contributes to the Mg(2+) binding site.

This sequence belongs to the arthropod phospholipase D family. Class I subfamily. Requires Mg(2+) as cofactor. Expressed by the venom gland.

It localises to the secreted. It carries out the reaction an N-(acyl)-sphingosylphosphocholine = an N-(acyl)-sphingosyl-1,3-cyclic phosphate + choline. It catalyses the reaction an N-(acyl)-sphingosylphosphoethanolamine = an N-(acyl)-sphingosyl-1,3-cyclic phosphate + ethanolamine. The catalysed reaction is a 1-acyl-sn-glycero-3-phosphocholine = a 1-acyl-sn-glycero-2,3-cyclic phosphate + choline. The enzyme catalyses a 1-acyl-sn-glycero-3-phosphoethanolamine = a 1-acyl-sn-glycero-2,3-cyclic phosphate + ethanolamine. Dermonecrotic toxins cleave the phosphodiester linkage between the phosphate and headgroup of certain phospholipids (sphingolipid and lysolipid substrates), forming an alcohol (often choline) and a cyclic phosphate. This toxin acts on sphingomyelin (SM). It may also act on ceramide phosphoethanolamine (CPE), lysophosphatidylcholine (LPC) and lysophosphatidylethanolamine (LPE), but not on lysophosphatidylserine (LPS), and lysophosphatidylglycerol (LPG). It acts by transphosphatidylation, releasing exclusively cyclic phosphate products as second products. Induces dermonecrosis, hemolysis, increased vascular permeability, edema, inflammatory response, and platelet aggregation. The polypeptide is Dermonecrotic toxin LspiSicTox-betaIE1i (Loxosceles spinulosa (Recluse spider)).